Consider the following 161-residue polypeptide: Transcription elongation factor GreA (161 aa).

The stretch at N45 to A72 forms a coiled coil.

Belongs to the GreA/GreB family.

In terms of biological role, necessary for efficient RNA polymerase transcription elongation past template-encoded arresting sites. The arresting sites in DNA have the property of trapping a certain fraction of elongating RNA polymerases that pass through, resulting in locked ternary complexes. Cleavage of the nascent transcript by cleavage factors such as GreA or GreB allows the resumption of elongation from the new 3'terminus. GreA releases sequences of 2 to 3 nucleotides. In Aliarcobacter butzleri (strain RM4018) (Arcobacter butzleri), this protein is Transcription elongation factor GreA.